We begin with the raw amino-acid sequence, 167 residues long: Peptidyl-prolyl cis-trans isomerase-like 3 (167 aa).

A PPIase cyclophilin-type domain is found at methionine 1–valine 160.

Belongs to the cyclophilin-type PPIase family. PPIL3 subfamily.

The catalysed reaction is [protein]-peptidylproline (omega=180) = [protein]-peptidylproline (omega=0). Its function is as follows. PPIases accelerate the folding of proteins. It catalyzes the cis-trans isomerization of proline imidic peptide bonds in oligopeptides. The polypeptide is Peptidyl-prolyl cis-trans isomerase-like 3 (cyp-10) (Neurospora crassa (strain ATCC 24698 / 74-OR23-1A / CBS 708.71 / DSM 1257 / FGSC 987)).